The following is a 187-amino-acid chain: Elongation factor P (187 aa).

It belongs to the elongation factor P family.

The protein resides in the cytoplasm. It participates in protein biosynthesis; polypeptide chain elongation. Involved in peptide bond synthesis. Stimulates efficient translation and peptide-bond synthesis on native or reconstituted 70S ribosomes in vitro. Probably functions indirectly by altering the affinity of the ribosome for aminoacyl-tRNA, thus increasing their reactivity as acceptors for peptidyl transferase. This Thermodesulfovibrio yellowstonii (strain ATCC 51303 / DSM 11347 / YP87) protein is Elongation factor P.